A 206-amino-acid polypeptide reads, in one-letter code: Urease accessory protein UreG (206 aa).

Position 14 to 21 (14 to 21 (GPVGSGKT)) interacts with GTP.

It belongs to the SIMIBI class G3E GTPase family. UreG subfamily. In terms of assembly, homodimer. UreD, UreF and UreG form a complex that acts as a GTP-hydrolysis-dependent molecular chaperone, activating the urease apoprotein by helping to assemble the nickel containing metallocenter of UreC. The UreE protein probably delivers the nickel.

It localises to the cytoplasm. In terms of biological role, facilitates the functional incorporation of the urease nickel metallocenter. This process requires GTP hydrolysis, probably effectuated by UreG. This chain is Urease accessory protein UreG, found in Brucella anthropi (strain ATCC 49188 / DSM 6882 / CCUG 24695 / JCM 21032 / LMG 3331 / NBRC 15819 / NCTC 12168 / Alc 37) (Ochrobactrum anthropi).